We begin with the raw amino-acid sequence, 250 residues long: 3-deoxy-manno-octulosonate cytidylyltransferase (250 aa).

This sequence belongs to the KdsB family.

The protein localises to the cytoplasm. The catalysed reaction is 3-deoxy-alpha-D-manno-oct-2-ulosonate + CTP = CMP-3-deoxy-beta-D-manno-octulosonate + diphosphate. It functions in the pathway nucleotide-sugar biosynthesis; CMP-3-deoxy-D-manno-octulosonate biosynthesis; CMP-3-deoxy-D-manno-octulosonate from 3-deoxy-D-manno-octulosonate and CTP: step 1/1. Its pathway is bacterial outer membrane biogenesis; lipopolysaccharide biosynthesis. Activates KDO (a required 8-carbon sugar) for incorporation into bacterial lipopolysaccharide in Gram-negative bacteria. The protein is 3-deoxy-manno-octulosonate cytidylyltransferase of Rhodopirellula baltica (strain DSM 10527 / NCIMB 13988 / SH1).